Reading from the N-terminus, the 407-residue chain is Lysine racemase (407 aa).

Residues 1–18 (MSLGIRYLALLPLFVITA) form the signal peptide. A lipid anchor (N-palmitoyl cysteine) is attached at cysteine 19. A lipid anchor (S-diacylglycerol cysteine) is attached at cysteine 19. Cysteine 70 and cysteine 96 are oxidised to a cystine. Lysine 74 serves as the catalytic Proton acceptor. The residue at position 74 (lysine 74) is an N6-(pyridoxal phosphate)lysine. Arginine 173 provides a ligand contact to substrate. The active-site Proton acceptor is tyrosine 299. Methionine 347 contributes to the substrate binding site.

Belongs to the alanine racemase family. Bsr subfamily. In terms of assembly, forms a head-to-tail homodimer in the structure. It depends on pyridoxal 5'-phosphate as a cofactor.

The protein localises to the cell membrane. It is found in the periplasm. It carries out the reaction L-lysine = D-lysine. It catalyses the reaction L-arginine = D-arginine. With respect to regulation, the racemization activity of Lyr is completely inhibited by hydroxylamine. In terms of biological role, amino-acid racemase that catalyzes the interconversion of L-lysine and D-lysine. To a lesser extent, is also able to interconvert arginine enantiomers. Cannot use methionine, asparagine, alanine, leucine, glutamine, phenylalanine and histidine as substrates. The chain is Lysine racemase from Proteus mirabilis.